The following is a 398-amino-acid chain: Serpin-Z1A (398 aa).

The RCL stretch occupies residues 343–367 (GTEAAASTAIKMVLQQARPPSVMDF).

This sequence belongs to the serpin family.

In terms of biological role, inhibits chymotrypsin and cathepsin G in vitro. The protein is Serpin-Z1A (WZCI) of Triticum aestivum (Wheat).